The primary structure comprises 1058 residues: Protein argonaute MEL1 (1058 aa).

Composition is skewed to gly residues over residues M1–G12 and D24–A37. 2 disordered regions span residues M1 to P77 and R115 to T147. Over residues W48–P70 the composition is skewed to pro residues. The span at H121 to T147 shows a compositional bias: low complexity. In terms of domain architecture, PAZ spans T407–E520. The Piwi domain occupies L696–E1016.

This sequence belongs to the argonaute family. Ago subfamily.

It is found in the nucleus. The protein localises to the nucleolus. Its function is as follows. Essential for the progression of premeiotic mitosis and meiosis during sporogenesis. Regulates the cell division of premeiotic germ cells, the proper modification of meiotic chromosomes, and the faithful progression of meiosis, probably via small RNA-mediated gene silencing. May be involved in histone H3 'Lys-9' demethylation in the pericentromeric region. The chain is Protein argonaute MEL1 (MEL1) from Oryza sativa subsp. japonica (Rice).